Reading from the N-terminus, the 433-residue chain is MTILVLGINHKTASVALREKVAFSDEKRLLALKQIKQTQLAESAVILSTCNRTEVYLHNKNVGPQNDEVWLDSCVQWFADIHQVDLEELKSCLYSQQNLQASRHLMRVASGLDSLILGEPQILGQVKQAYQMSEEYYSLHSDIGMMSTELSRLFQKTFATAKRVRTETHIGESAVSVAYAACSLARQIFDSLRNLNILLVGAGETIELVSRHLLRHGVNGLAIANRTLSRAEKLVEKLETTQKIDIFSLDRLSEGLKRADIVITSTGSPHVLISRNLIEQAQQMRHYKPMLIVDIAVPRDVEESAGEIESVYHYTVDDLHNIIQYNINQREQASQQAEHIIQQESADFFEWLKVHQFSNLIRNYRESAEIIRQDLLEKALQALQNGENTEQVLQELSHKLTKKLIHQPTQAMQTMVKAGNTEGLQAFSHAVKF.

Residues 49-52 (TCNR), S114, 119-121 (EPQ), and Q125 each bind substrate. C50 serves as the catalytic Nucleophile. 201-206 (GAGETI) provides a ligand contact to NADP(+).

This sequence belongs to the glutamyl-tRNA reductase family. In terms of assembly, homodimer.

The catalysed reaction is (S)-4-amino-5-oxopentanoate + tRNA(Glu) + NADP(+) = L-glutamyl-tRNA(Glu) + NADPH + H(+). It participates in porphyrin-containing compound metabolism; protoporphyrin-IX biosynthesis; 5-aminolevulinate from L-glutamyl-tRNA(Glu): step 1/2. Functionally, catalyzes the NADPH-dependent reduction of glutamyl-tRNA(Glu) to glutamate 1-semialdehyde (GSA). This is Glutamyl-tRNA reductase from Histophilus somni (strain 129Pt) (Haemophilus somnus).